A 324-amino-acid chain; its full sequence is Beta-ketoacyl-[acyl-carrier-protein] synthase III (324 aa).

Residues cysteine 112 and histidine 249 contribute to the active site. The tract at residues 250–254 (QANIR) is ACP-binding. Residue asparagine 279 is part of the active site.

The protein belongs to the thiolase-like superfamily. FabH family. As to quaternary structure, homodimer.

The protein localises to the cytoplasm. It catalyses the reaction malonyl-[ACP] + acetyl-CoA + H(+) = 3-oxobutanoyl-[ACP] + CO2 + CoA. It functions in the pathway lipid metabolism; fatty acid biosynthesis. Functionally, catalyzes the condensation reaction of fatty acid synthesis by the addition to an acyl acceptor of two carbons from malonyl-ACP. Catalyzes the first condensation reaction which initiates fatty acid synthesis and may therefore play a role in governing the total rate of fatty acid production. Possesses both acetoacetyl-ACP synthase and acetyl transacylase activities. Its substrate specificity determines the biosynthesis of branched-chain and/or straight-chain of fatty acids. This chain is Beta-ketoacyl-[acyl-carrier-protein] synthase III, found in Streptococcus sanguinis (strain SK36).